Here is a 723-residue protein sequence, read N- to C-terminus: FACT complex subunit Ssrp1 (723 aa).

Serine 443 is subject to Phosphoserine. 2 disordered regions span residues 459–564 (EARE…AFML) and 586–723 (AKKG…EASD). Acidic residues-rich tracts occupy residues 464-478 (EEDDDDGDSDEESTD) and 486-507 (NESDVAEEYDSNVESDSDDDSD). Residues 531 to 557 (KKEKKHKEKERTKKPSKKKKDSGKPKR) show a composition bias toward basic residues. The segment at residues 555–621 (PKRATTAFML…RYHDEMRNYK (67 aa)) is a DNA-binding region (HMG box). The segment covering 586-621 (AKKGGEMWKELKDKSKWEDAAAKDKQRYHDEMRNYK) has biased composition (basic and acidic residues). Phosphoserine is present on serine 628. Residues 644–656 (PSPSKKANTSGSG) show a composition bias toward polar residues. Phosphoserine is present on residues serine 664 and serine 668. Positions 664–676 (SDDDSTSSDDEKD) are enriched in acidic residues. Threonine 669 carries the phosphothreonine modification. Phosphoserine is present on residues serine 670 and serine 671. Residues 677-692 (NEPAKKKSKPPSDGDA) are compositionally biased toward basic and acidic residues. Positions 702-723 (EPEESEEDSNASDEDEEDEASD) are enriched in acidic residues.

The protein belongs to the SSRP1 family. Component of the FACT complex, a stable heterodimer of dre4/spt16 and Ssrp. Interacts with CHD1 and TRL/GAGA. In terms of tissue distribution, expressed at highest levels in nurse cells of the ovary.

The protein resides in the nucleus. It is found in the chromosome. It localises to the nucleolus. Component of the FACT complex, a general chromatin factor that acts to reorganize nucleosomes. The FACT complex is involved in multiple processes that require DNA as a template such as mRNA elongation, DNA replication and DNA repair. During transcription elongation the FACT complex acts as a histone chaperone that both destabilizes and restores nucleosomal structure. It facilitates the passage of RNA polymerase II and transcription by promoting the dissociation of one histone H2A-H2B dimer from the nucleosome, then subsequently promotes the reestablishment of the nucleosome following the passage of RNA polymerase II. Binds specifically to single-stranded DNA and RNA with highest affinity for nucleotides G and U. The FACT complex is required for expression of Hox genes. The sequence is that of FACT complex subunit Ssrp1 (Ssrp) from Drosophila melanogaster (Fruit fly).